Reading from the N-terminus, the 477-residue chain is Sensor protein kinase PmrB (477 aa).

2 helical membrane passes run Leu-13–Tyr-33 and Leu-161–Val-181. Residues Ala-186–Glu-238 form the HAMP domain. The Histidine kinase domain maps to Asp-246–Gln-459. Residue His-249 is modified to Phosphohistidine; by autocatalysis. Residues Leu-455–Ile-477 are disordered.

The protein localises to the membrane. It catalyses the reaction ATP + protein L-histidine = ADP + protein N-phospho-L-histidine.. Functionally, member of the two-component regulatory system PmrA/PmrB that plays a role in the regulation of resistance towards polymyxin B and cationic antimicrobial peptides in response to limiting concentrations of Mg(2+). Also autoregulates its own pmrAB operon under Mg(2+)-limiting conditions. May function as a membrane-associated protein kinase that phosphorylates PmrA in response to environmental signals leading to activation of specific gene promoters. The polypeptide is Sensor protein kinase PmrB (pmrB) (Pseudomonas aeruginosa (strain ATCC 15692 / DSM 22644 / CIP 104116 / JCM 14847 / LMG 12228 / 1C / PRS 101 / PAO1)).